The primary structure comprises 552 residues: HTH-type transcriptional regulator SgrR (552 aa).

The HTH marR-type domain maps to 1 to 116 (MPSARLQQQF…LVSHLGRSFR (116 aa)). A DNA-binding region (H-T-H motif) is located at residues 26–49 (LNELAALLSCSRRHMRTLLNTMQD). The interval 163-492 (ELEADIAHHW…IDWQVDAARW (330 aa)) is solute-binding.

In terms of biological role, activates the small RNA gene sgrS under glucose-phosphate stress conditions as well as yfdZ. Represses its own transcription under both stress and non-stress conditions. Might act as a sensor of the intracellular accumulation of phosphoglucose by binding these molecules in its C-terminal solute-binding domain. This chain is HTH-type transcriptional regulator SgrR, found in Escherichia coli O157:H7.